Here is a 303-residue protein sequence, read N- to C-terminus: Dihydroorotate dehydrogenase B (NAD(+)), catalytic subunit (303 aa).

FMN-binding positions include serine 21 and 45 to 46; that span reads KG. Residues lysine 45 and 69–73 contribute to the substrate site; that span reads NCIGL. 2 residues coordinate FMN: asparagine 98 and asparagine 126. Asparagine 126 contacts substrate. Cysteine 129 (nucleophile) is an active-site residue. The FMN site is built by lysine 165 and valine 191. 192–193 lines the substrate pocket; sequence NT. Residues glycine 217 and 243–244 each bind FMN; that span reads GG.

The protein belongs to the dihydroorotate dehydrogenase family. Type 1 subfamily. In terms of assembly, heterotetramer of 2 PyrK and 2 PyrD type B subunits. FMN serves as cofactor.

It localises to the cytoplasm. It catalyses the reaction (S)-dihydroorotate + NAD(+) = orotate + NADH + H(+). The protein operates within pyrimidine metabolism; UMP biosynthesis via de novo pathway; orotate from (S)-dihydroorotate (NAD(+) route): step 1/1. Functionally, catalyzes the conversion of dihydroorotate to orotate with NAD(+) as electron acceptor. The polypeptide is Dihydroorotate dehydrogenase B (NAD(+)), catalytic subunit (pyrD) (Brachyspira hyodysenteriae (strain ATCC 49526 / WA1)).